The following is a 238-amino-acid chain: MIKLFICQKKYYLTAIFLLTIQSCASVEYKPLVTGATTAIAPNIWPKVVNGSLFQEKIPINYGYQPLFEDHRPHNIGDTITVVLQENISASNSSISNMSRDGSANFGLKIAPGQLNNILGVNFQDNTTSLDSFGRNNFSGKGSNSANNKFTGLITVTVKRVLPNGNLKVIGEKQVSINKGTEFIRFSGVINPTNINKNNFISSTQIADARIEYLSHGGLDDVQKMGWLQKLLLKISPI.

The first 23 residues, Met1–Ser23, serve as a signal peptide directing secretion. Cys24 is lipidated: N-palmitoyl cysteine. Cys24 is lipidated: S-diacylglycerol cysteine.

Belongs to the FlgH family. The basal body constitutes a major portion of the flagellar organelle and consists of four rings (L,P,S, and M) mounted on a central rod.

Its subcellular location is the cell outer membrane. The protein resides in the bacterial flagellum basal body. Assembles around the rod to form the L-ring and probably protects the motor/basal body from shearing forces during rotation. This is Flagellar L-ring protein from Buchnera aphidicola subsp. Acyrthosiphon pisum (strain 5A).